Here is a 536-residue protein sequence, read N- to C-terminus: Thiamine transport system permease protein ThiP (536 aa).

12 consecutive transmembrane segments (helical) span residues 12–32 (WLIP…AAFL), 58–78 (FSFW…IFLA), 95–115 (LCAM…LSVY), 134–154 (FSPY…LPMA), 199–219 (VAAL…SLGG), 240–260 (PARA…LVLL), 293–313 (VLIV…IVDG), 334–354 (SLRI…MLLW), 374–394 (SGML…FLLL), 404–424 (ADGI…LKVL), 463–483 (AQAL…VALF), and 506–526 (DGAV…TVIE). The 206-residue stretch at 56–261 (VRFSFWQAFL…VCCLGLVLLS (206 aa)) folds into the ABC transmembrane type-1 1 domain. Residues 331–525 (LWTSLRIALA…LLCFLLFTVI (195 aa)) form the ABC transmembrane type-1 2 domain.

The protein belongs to the binding-protein-dependent transport system permease family. CysTW subfamily. In terms of assembly, the complex is composed of two ATP-binding proteins (ThiQ), two transmembrane proteins (ThiP) and a solute-binding protein (ThiB).

It localises to the cell inner membrane. Its activity is regulated as follows. Transport is inhibited by the sulfhydryl-specific modifier N-ethylmaleimide. Functionally, part of the ABC transporter complex ThiBPQ involved in thiamine import. Probably responsible for the translocation of the substrate across the membrane. The polypeptide is Thiamine transport system permease protein ThiP (thiP) (Escherichia coli (strain K12)).